The following is a 372-amino-acid chain: NAD(P)H-quinone oxidoreductase subunit 1 (372 aa).

The next 8 membrane-spanning stretches (helical) occupy residues 28–48 (IWLP…VLVV), 97–117 (WLFT…YLIV), 130–150 (VGIF…LMSG), 176–196 (LALA…IDIV), 204–224 (ILGW…IAAL), 265–285 (LVLS…FPIP), 308–328 (SLGI…AVLL), and 351–371 (VALV…IAFG).

It belongs to the complex I subunit 1 family. NDH-1 is composed of at least 11 different subunits.

The protein resides in the cellular thylakoid membrane. It catalyses the reaction a plastoquinone + NADH + (n+1) H(+)(in) = a plastoquinol + NAD(+) + n H(+)(out). The enzyme catalyses a plastoquinone + NADPH + (n+1) H(+)(in) = a plastoquinol + NADP(+) + n H(+)(out). Functionally, NDH-1 shuttles electrons from an unknown electron donor, via FMN and iron-sulfur (Fe-S) centers, to quinones in the respiratory and/or the photosynthetic chain. The immediate electron acceptor for the enzyme in this species is believed to be plastoquinone. Couples the redox reaction to proton translocation, and thus conserves the redox energy in a proton gradient. The sequence is that of NAD(P)H-quinone oxidoreductase subunit 1 from Picosynechococcus sp. (strain ATCC 27264 / PCC 7002 / PR-6) (Agmenellum quadruplicatum).